The following is a 416-amino-acid chain: Phosphoribosylamine--glycine ligase (416 aa).

Positions 105–310 (KSFLKKYRIK…PLELILAATQ (206 aa)) constitute an ATP-grasp domain. An ATP-binding site is contributed by 131–192 (IYSLTPPIVV…EEFLDGYELS (62 aa)). Mg(2+)-binding residues include glutamate 281 and asparagine 283.

It belongs to the GARS family. Mg(2+) serves as cofactor. Requires Mn(2+) as cofactor.

The enzyme catalyses 5-phospho-beta-D-ribosylamine + glycine + ATP = N(1)-(5-phospho-beta-D-ribosyl)glycinamide + ADP + phosphate + H(+). Its pathway is purine metabolism; IMP biosynthesis via de novo pathway; N(1)-(5-phospho-D-ribosyl)glycinamide from 5-phospho-alpha-D-ribose 1-diphosphate: step 2/2. The polypeptide is Phosphoribosylamine--glycine ligase (Campylobacter jejuni subsp. jejuni serotype O:2 (strain ATCC 700819 / NCTC 11168)).